We begin with the raw amino-acid sequence, 117 residues long: Large ribosomal subunit protein uL18 (117 aa).

Residues 1–17 (MNLSRNKARKVKQKRLR) are compositionally biased toward basic residues. The disordered stretch occupies residues 1 to 23 (MNLSRNKARKVKQKRLRAKSELS).

This sequence belongs to the universal ribosomal protein uL18 family. Part of the 50S ribosomal subunit; part of the 5S rRNA/L5/L18/L25 subcomplex. Contacts the 5S and 23S rRNAs.

This is one of the proteins that bind and probably mediate the attachment of the 5S RNA into the large ribosomal subunit, where it forms part of the central protuberance. This Mycoplasmopsis synoviae (strain 53) (Mycoplasma synoviae) protein is Large ribosomal subunit protein uL18.